Consider the following 361-residue polypeptide: 3-dehydroquinate synthase (361 aa).

NAD(+) is bound by residues 72 to 77 (SGEKEK), 130 to 131 (TT), K142, and K151. E184, H247, and H264 together coordinate Zn(2+).

This sequence belongs to the sugar phosphate cyclases superfamily. Dehydroquinate synthase family. Co(2+) serves as cofactor. Requires Zn(2+) as cofactor. The cofactor is NAD(+).

The protein localises to the cytoplasm. It carries out the reaction 7-phospho-2-dehydro-3-deoxy-D-arabino-heptonate = 3-dehydroquinate + phosphate. Its pathway is metabolic intermediate biosynthesis; chorismate biosynthesis; chorismate from D-erythrose 4-phosphate and phosphoenolpyruvate: step 2/7. Functionally, catalyzes the conversion of 3-deoxy-D-arabino-heptulosonate 7-phosphate (DAHP) to dehydroquinate (DHQ). The chain is 3-dehydroquinate synthase from Bacillus cereus (strain ZK / E33L).